Reading from the N-terminus, the 139-residue chain is Crossover junction endodeoxyribonuclease Hje (139 aa).

Positions 10, 39, and 52 each coordinate Mg(2+).

This sequence belongs to the Holliday junction resolvase Hjc family. Hje subfamily. Homodimer. The cofactor is Mg(2+).

The enzyme catalyses Endonucleolytic cleavage at a junction such as a reciprocal single-stranded crossover between two homologous DNA duplexes (Holliday junction).. In terms of biological role, a structure-specific endonuclease that resolves Holliday junction (HJ) intermediates during genetic recombination. Acts only on 4-way DNA junctions in a sequence non-specific manner; introduces paired nicks in opposing strands 2 bases 3' of the point of strand exchange only on continuous strands of 4-way junction DNA. Cleaves both mobile and immobile junctions. Functionally, redundant function with Holliday junction resolvase Hjc. This chain is Crossover junction endodeoxyribonuclease Hje, found in Sulfolobus acidocaldarius (strain ATCC 33909 / DSM 639 / JCM 8929 / NBRC 15157 / NCIMB 11770).